Consider the following 207-residue polypeptide: Ribosomal RNA large subunit methyltransferase E (207 aa).

S-adenosyl-L-methionine is bound by residues Gly61, Trp63, Asp81, Asp97, and Asp122. Residue Lys162 is the Proton acceptor of the active site.

Belongs to the class I-like SAM-binding methyltransferase superfamily. RNA methyltransferase RlmE family.

It is found in the cytoplasm. The enzyme catalyses uridine(2552) in 23S rRNA + S-adenosyl-L-methionine = 2'-O-methyluridine(2552) in 23S rRNA + S-adenosyl-L-homocysteine + H(+). Functionally, specifically methylates the uridine in position 2552 of 23S rRNA at the 2'-O position of the ribose in the fully assembled 50S ribosomal subunit. This Pseudomonas putida (strain ATCC 700007 / DSM 6899 / JCM 31910 / BCRC 17059 / LMG 24140 / F1) protein is Ribosomal RNA large subunit methyltransferase E.